The primary structure comprises 47 residues: Protein YpaB (47 aa).

This Escherichia coli (strain K12) protein is Protein YpaB (ypaB).